Consider the following 89-residue polypeptide: MAKKSMVAREAKRQKIVDRYAEKRAALKAAGDYEGLSKLPRNASPTRLHNRCRVTGRPHSVYRKFGLSRIAFRELAHKGQIPGVTKASW.

Belongs to the universal ribosomal protein uS14 family. In terms of assembly, part of the 30S ribosomal subunit. Contacts proteins S3 and S10.

Binds 16S rRNA, required for the assembly of 30S particles and may also be responsible for determining the conformation of the 16S rRNA at the A site. The chain is Small ribosomal subunit protein uS14 from Streptococcus pneumoniae serotype 2 (strain D39 / NCTC 7466).